A 208-amino-acid chain; its full sequence is Uracil phosphoribosyltransferase (208 aa).

5-phospho-alpha-D-ribose 1-diphosphate-binding positions include R78, R103, and D130–S138. Uracil-binding positions include I193 and G198 to A200. Residue D199 participates in 5-phospho-alpha-D-ribose 1-diphosphate binding.

Belongs to the UPRTase family. Mg(2+) is required as a cofactor.

It catalyses the reaction UMP + diphosphate = 5-phospho-alpha-D-ribose 1-diphosphate + uracil. It functions in the pathway pyrimidine metabolism; UMP biosynthesis via salvage pathway; UMP from uracil: step 1/1. With respect to regulation, allosterically activated by GTP. Functionally, catalyzes the conversion of uracil and 5-phospho-alpha-D-ribose 1-diphosphate (PRPP) to UMP and diphosphate. This Neisseria meningitidis serogroup A / serotype 4A (strain DSM 15465 / Z2491) protein is Uracil phosphoribosyltransferase.